A 483-amino-acid chain; its full sequence is Spore germination protein B1 (483 aa).

The next 5 membrane-spanning stretches (helical) occupy residues 289–309, 323–343, 353–373, 375–395, and 410–430; these read ILITIYLPGLYISLVSFHTGL, LNVPFPPFVEAFIMIFTIELI, PIGQTIGLIGGVVIGQAAVQA, IVSALMVIVVSVTALASFTVP, and VMISATALGMYGVIMVYLFVI.

Belongs to the GerABKA family.

The protein localises to the cell membrane. In terms of biological role, involved in the response to the germinative mixture of L-asparagine, glucose, fructose and potassium ions (AGFK). Cannot stimulate germination in the absence of gerD and gerK gene products (fructose and glucose receptors respectively). The protein is Spore germination protein B1 (gerBA) of Bacillus subtilis (strain 168).